An 834-amino-acid polypeptide reads, in one-letter code: Probable phosphoenolpyruvate synthase (834 aa).

Histidine 447 serves as the catalytic Tele-phosphohistidine intermediate. Residues arginine 550, arginine 598, glutamate 699, glycine 720, serine 721, asparagine 722, and aspartate 723 each coordinate substrate. Glutamate 699 lines the Mg(2+) pocket. Aspartate 723 is a binding site for Mg(2+). Cysteine 772 (proton donor) is an active-site residue.

The protein belongs to the PEP-utilizing enzyme family. Homooligomer. Forms a large complex of about 2000 kDa. The cofactor is Mg(2+). Post-translationally, the N-terminus is blocked.

The catalysed reaction is pyruvate + ATP + H2O = phosphoenolpyruvate + AMP + phosphate + 2 H(+). Its pathway is carbohydrate biosynthesis; gluconeogenesis. Its function is as follows. Catalyzes the phosphorylation of pyruvate to phosphoenolpyruvate. This Staphylothermus marinus (strain ATCC 43588 / DSM 3639 / JCM 9404 / F1) protein is Probable phosphoenolpyruvate synthase (ppsA).